A 245-amino-acid polypeptide reads, in one-letter code: MYRYKITIEYLGTDLAGWQRQAGVMSVQQILEEAIYKFSGEQVILFGSGRTDAGVHAVGQVAHFDLSKYLEPHKIITAINYFARPYAVGVWNCELAPNNFHARFSATSRYYIYRIINRPCPSVIDLNRAWWISSPLDVPAMQQAAAYLLGKHDFTSFRASSCQSKSPIKTLTELNIIKEDEEIKLYLSAPSFLHHMVRNIVGSLVLVGKNIWQAEQIKDVLEAKDRKAAGPTAPASGLYFVKAAY.

D52 serves as the catalytic Nucleophile. Y111 provides a ligand contact to substrate.

It belongs to the tRNA pseudouridine synthase TruA family. In terms of assembly, homodimer.

The enzyme catalyses uridine(38/39/40) in tRNA = pseudouridine(38/39/40) in tRNA. Formation of pseudouridine at positions 38, 39 and 40 in the anticodon stem and loop of transfer RNAs. The protein is tRNA pseudouridine synthase A of Rickettsia peacockii (strain Rustic).